The chain runs to 157 residues: MFCPFCRHPDSRVVDSRTSDDGLSIRRRRQCPECGRRFSTTETASLSVIKRNGVVEPFSREKIVTGVRKACQGRPVTDTDLAVLAQRVEEAIRATGASQIEANDIGLSILPPLRELDEVAYLRFASVYQGFDSLDDFESAIAQLRVAHAATPDADAL.

A zinc finger spans residues 3-34; sequence CPFCRHPDSRVVDSRTSDDGLSIRRRRQCPEC. The ATP-cone domain occupies 46-136; sequence LSVIKRNGVV…VYQGFDSLDD (91 aa).

The protein belongs to the NrdR family. It depends on Zn(2+) as a cofactor.

In terms of biological role, negatively regulates transcription of bacterial ribonucleotide reductase nrd genes and operons by binding to NrdR-boxes. This chain is Transcriptional repressor NrdR, found in Clavibacter michiganensis subsp. michiganensis (strain NCPPB 382).